A 115-amino-acid polypeptide reads, in one-letter code: Histone H2A-Bbd type 2/3 (115 aa).

Residues 1 to 21 are disordered; that stretch reads MPRRRRRRGSSGAGGRGRTCS. Residues 87–115 are docking domain; sequence LLDMVVHNDRLLSTLFNTTTISQVAPGED.

The protein belongs to the histone H2A family. As to quaternary structure, the nucleosome is a histone octamer containing two molecules each of H2A, H2B, H3 and H4 assembled in one H3-H4 heterotetramer and two H2A-H2B heterodimers. May be incorporated into a proportion of nucleosomes, replacing one or more H2A molecules. As to expression, present in mature sperm.

The protein localises to the nucleus. The protein resides in the chromosome. In terms of biological role, atypical histone H2A which can replace conventional H2A in some nucleosomes and is associated with active transcription and mRNA processing. Nucleosomes wrap and compact DNA into chromatin, limiting DNA accessibility to the cellular machineries which require DNA as a template. Histones thereby play a central role in transcription regulation, DNA repair, DNA replication and chromosomal stability. Nucleosomes containing this histone are less rigid and organize less DNA than canonical nucleosomes in vivo. They are enriched in actively transcribed genes and associate with the elongating form of RNA polymerase. They associate with spliceosome components and are required for mRNA splicing. May participate in spermatogenesis. This chain is Histone H2A-Bbd type 2/3, found in Homo sapiens (Human).